Reading from the N-terminus, the 245-residue chain is 1-(5-phosphoribosyl)-5-[(5-phosphoribosylamino)methylideneamino] imidazole-4-carboxamide isomerase (245 aa).

The Proton acceptor role is filled by aspartate 7. The active-site Proton donor is aspartate 129.

It belongs to the HisA/HisF family.

It localises to the cytoplasm. It carries out the reaction 1-(5-phospho-beta-D-ribosyl)-5-[(5-phospho-beta-D-ribosylamino)methylideneamino]imidazole-4-carboxamide = 5-[(5-phospho-1-deoxy-D-ribulos-1-ylimino)methylamino]-1-(5-phospho-beta-D-ribosyl)imidazole-4-carboxamide. It participates in amino-acid biosynthesis; L-histidine biosynthesis; L-histidine from 5-phospho-alpha-D-ribose 1-diphosphate: step 4/9. In Pectobacterium carotovorum subsp. carotovorum (strain PC1), this protein is 1-(5-phosphoribosyl)-5-[(5-phosphoribosylamino)methylideneamino] imidazole-4-carboxamide isomerase.